Consider the following 427-residue polypeptide: C4-dicarboxylate TRAP transporter large permease protein DctM (427 aa).

The next 13 helical transmembrane spans lie at 2 to 22 (TILF…PIAV), 55 to 75 (TLLA…GGVA), 91 to 111 (GGLA…SGSS), 115 to 135 (VAAV…PQAF), 138 to 158 (GIVC…VMVV), 171 to 191 (FIAG…VIYI), 216 to 236 (ALWG…GAFT), 237 to 257 (PTEA…FVYR), 274 to 294 (LTIM…VLTT), 310 to 330 (LSPW…GNFM), 335 to 355 (IILI…IDPI), 359 to 379 (IIMV…LNLF), and 396 to 416 (ALPW…IPAV).

This sequence belongs to the TRAP transporter large permease family. In terms of assembly, the complex comprises the extracytoplasmic solute receptor protein DctP, and the two transmembrane proteins DctQ and DctM.

The protein localises to the cell inner membrane. Part of the tripartite ATP-independent periplasmic (TRAP) transport system DctPQM involved in C4-dicarboxylates uptake. The polypeptide is C4-dicarboxylate TRAP transporter large permease protein DctM (Pseudomonas aeruginosa (strain ATCC 15692 / DSM 22644 / CIP 104116 / JCM 14847 / LMG 12228 / 1C / PRS 101 / PAO1)).